A 247-amino-acid polypeptide reads, in one-letter code: Protein IRON-RELATED TRANSCRIPTION FACTOR 2 (247 aa).

The Nuclear localization signal signature appears at 68-75 (HRKLSHNA). The tract at residues 68–81 (HRKLSHNAYERDRR) is basic motif. The bHLH domain occupies 68-119 (HRKLSHNAYERDRRKQLNELYSSLRALLPDADHTKLSIPTTVSRVLKYIPEL). Residues 82–119 (KQLNELYSSLRALLPDADHTKLSIPTTVSRVLKYIPEL) form a helix-loop-helix motif region.

The protein belongs to the bHLH protein family. As to quaternary structure, forms homodimers. Interacts with BHLH156 in the nucleus. In terms of tissue distribution, expressed constitutively at low levels in the roots. Also observed in flowers, developing seeds, embryos and vascular bundles.

The protein localises to the nucleus. It is found in the cytoplasm. In terms of biological role, transcription activator that binds to the DNA motif 5'-CACGTGG-3' in the promoter of iron (Fe) deficiency-inducible genes as well as of genes involved in iron homeostasis, thus contributing to basal tolerance to iron deficiency, iron uptake from soil and iron transport, particularly during seed maturation and germination. Promotes the accumulation of mugineic acid family phytosiderophores (MAs). Required for ethylene-mediated signaling during iron deficiency responses. Improves growth and yield, especially in calcareous soil with low iron availability. Promotes iron concentration in shoots and grain. This Oryza sativa subsp. japonica (Rice) protein is Protein IRON-RELATED TRANSCRIPTION FACTOR 2.